The primary structure comprises 215 residues: Cytochrome b6 (215 aa).

Residues 32 to 52 (IFYCLGGITLTCFLVQVATGF) form a helical membrane-spanning segment. Cys35 is a heme c binding site. The heme b site is built by His86 and His100. The next 3 membrane-spanning stretches (helical) occupy residues 90 to 110 (ASMMVLMMILHVFRVYLTGGF), 116 to 136 (LTWVTGVVLAVLTASFGVTGY), and 186 to 206 (LHTFVLPLLTAVFMLMHFPMI). Positions 187 and 202 each coordinate heme b.

The protein belongs to the cytochrome b family. PetB subfamily. The 4 large subunits of the cytochrome b6-f complex are cytochrome b6, subunit IV (17 kDa polypeptide, PetD), cytochrome f and the Rieske protein, while the 4 small subunits are PetG, PetL, PetM and PetN. The complex functions as a dimer. Requires heme b as cofactor. It depends on heme c as a cofactor.

It is found in the plastid. It localises to the chloroplast thylakoid membrane. Component of the cytochrome b6-f complex, which mediates electron transfer between photosystem II (PSII) and photosystem I (PSI), cyclic electron flow around PSI, and state transitions. In Helianthus annuus (Common sunflower), this protein is Cytochrome b6.